The sequence spans 194 residues: Glycerol-3-phosphate acyltransferase (194 aa).

The next 6 helical transmembrane spans lie at 2–22 (AFFCFIVLTYFIGAIPSGVWI), 52–72 (LGVAVLIMDVLKGFIPLYIAS), 80–100 (DLVILGLVAILAHTFSCFISF), 112–132 (VFLFLIPVITLILLAIFILVA), 137–157 (YVSLASITAAFLLPIFTFFTH), and 161–181 (YLFALSVIIAVFVIYRHKTNI).

The protein belongs to the PlsY family. Probably interacts with PlsX.

It localises to the cell inner membrane. The catalysed reaction is an acyl phosphate + sn-glycerol 3-phosphate = a 1-acyl-sn-glycero-3-phosphate + phosphate. It functions in the pathway lipid metabolism; phospholipid metabolism. In terms of biological role, catalyzes the transfer of an acyl group from acyl-phosphate (acyl-PO(4)) to glycerol-3-phosphate (G3P) to form lysophosphatidic acid (LPA). This enzyme utilizes acyl-phosphate as fatty acyl donor, but not acyl-CoA or acyl-ACP. The polypeptide is Glycerol-3-phosphate acyltransferase (Fusobacterium nucleatum subsp. nucleatum (strain ATCC 25586 / DSM 15643 / BCRC 10681 / CIP 101130 / JCM 8532 / KCTC 2640 / LMG 13131 / VPI 4355)).